The following is a 346-amino-acid chain: Lipooligosaccharide heptosyltransferase 2 (346 aa).

This sequence belongs to the glycosyltransferase 9 family.

It catalyses the reaction an L-alpha-D-Hep-(1-&gt;5)-[alpha-Kdo-(2-&gt;4)]-alpha-Kdo-(2-&gt;6)-lipid A + ADP-L-glycero-beta-D-manno-heptose = an L-alpha-D-Hep-(1-&gt;3)-L-alpha-D-Hep-(1-&gt;5)-[alpha-Kdo-(2-&gt;4)]-alpha-Kdo-(2-&gt;6)-lipid A + ADP + H(+). It functions in the pathway bacterial outer membrane biogenesis; LOS core biosynthesis. Its function is as follows. Glycosyltransferase involved in the biosynthesis of the core oligosaccharide region of lipooligosaccharide (LOS). Catalyzes the addition of a heptose unit to the heptosyl-Kdo2-lipid A module. This chain is Lipooligosaccharide heptosyltransferase 2 (waaF), found in Haemophilus influenzae (strain ATCC 51907 / DSM 11121 / KW20 / Rd).